The primary structure comprises 130 residues: Histone H2A type 2-A (130 aa).

The segment at 1–22 (MSGRGKQGGKARAKAKSRSSRA) is disordered. S2 is subject to N-acetylserine. At S2 the chain carries Phosphoserine; by RPS6KA5. R4 is subject to Citrulline; alternate. R4 is modified (symmetric dimethylarginine; by PRMT5; alternate). Residues K6 and K10 each carry the N6-(2-hydroxyisobutyryl)lysine; alternate modification. At K6 the chain carries N6-(beta-hydroxybutyryl)lysine; alternate. K6 carries the post-translational modification N6-acetyllysine; alternate. Positions 7–19 (QGGKARAKAKSRS) are enriched in basic residues. K10 is modified (N6-lactoyllysine; alternate). K10 is subject to N6-succinyllysine; alternate. Glycyl lysine isopeptide (Lys-Gly) (interchain with G-Cter in ubiquitin) cross-links involve residues K14 and K16. N6-(2-hydroxyisobutyryl)lysine; alternate is present on K37. K37 is modified (N6-(beta-hydroxybutyryl)lysine; alternate). Residue K37 is modified to N6-crotonyllysine; alternate. N6-(2-hydroxyisobutyryl)lysine is present on residues K75 and K76. K96 carries the N6-(2-hydroxyisobutyryl)lysine; alternate modification. K96 carries the N6-succinyllysine; alternate modification. Position 96 is an N6-glutaryllysine; alternate (K96). Position 100 is an N6-glutaryllysine (K100). Q105 bears the N5-methylglutamine mark. At K119 the chain carries N6-(2-hydroxyisobutyryl)lysine; alternate. Residues K119 and K120 each carry the N6-crotonyllysine; alternate modification. 2 positions are modified to N6-glutaryllysine; alternate: K119 and K120. At K120 the chain carries N6-(beta-hydroxybutyryl)lysine; alternate. K120 is covalently cross-linked (Glycyl lysine isopeptide (Lys-Gly) (interchain with G-Cter in ubiquitin); alternate). T121 is modified (phosphothreonine; by DCAF1). N6-(beta-hydroxybutyryl)lysine; alternate is present on K126. Position 126 is an N6-crotonyllysine; alternate (K126). At K126 the chain carries N6-glutaryllysine; alternate.

This sequence belongs to the histone H2A family. The nucleosome is a histone octamer containing two molecules each of H2A, H2B, H3 and H4 assembled in one H3-H4 heterotetramer and two H2A-H2B heterodimers. The octamer wraps approximately 147 bp of DNA. Post-translationally, deiminated on Arg-4 in granulocytes upon calcium entry. Monoubiquitination of Lys-120 (H2AK119Ub) by RING1, TRIM37 and RNF2/RING2 complex gives a specific tag for epigenetic transcriptional repression and participates in X chromosome inactivation of female mammals. It is involved in the initiation of both imprinted and random X inactivation. Ubiquitinated H2A is enriched in inactive X chromosome chromatin. Ubiquitination of H2A functions downstream of methylation of 'Lys-27' of histone H3 (H3K27me). H2AK119Ub by RNF2/RING2 can also be induced by ultraviolet and may be involved in DNA repair. Following DNA double-strand breaks (DSBs), it is ubiquitinated through 'Lys-63' linkage of ubiquitin moieties by the E2 ligase UBE2N and the E3 ligases RNF8 and RNF168, leading to the recruitment of repair proteins to sites of DNA damage. Ubiquitination at Lys-14 and Lys-16 (H2AK13Ub and H2AK15Ub, respectively) in response to DNA damage is initiated by RNF168 that mediates monoubiquitination at these 2 sites, and 'Lys-63'-linked ubiquitin are then conjugated to monoubiquitin; RNF8 is able to extend 'Lys-63'-linked ubiquitin chains in vitro. H2AK119Ub and ionizing radiation-induced 'Lys-63'-linked ubiquitination (H2AK13Ub and H2AK15Ub) are distinct events. In terms of processing, phosphorylation on Ser-2 (H2AS1ph) is enhanced during mitosis. Phosphorylation on Ser-2 by RPS6KA5/MSK1 directly represses transcription. Acetylation of H3 inhibits Ser-2 phosphorylation by RPS6KA5/MSK1. Phosphorylation at Thr-121 (H2AT120ph) by DCAF1 is present in the regulatory region of many tumor suppresor genes and down-regulates their transcription. Post-translationally, symmetric dimethylation on Arg-4 by the PRDM1/PRMT5 complex may play a crucial role in the germ-cell lineage. Glutamine methylation at Gln-105 (H2AQ104me) by FBL is specifically dedicated to polymerase I. It is present at 35S ribosomal DNA locus and impairs binding of the FACT complex. In terms of processing, crotonylation (Kcr) is specifically present in male germ cells and marks testis-specific genes in post-meiotic cells, including X-linked genes that escape sex chromosome inactivation in haploid cells. Crotonylation marks active promoters and enhancers and confers resistance to transcriptional repressors. It is also associated with post-meiotically activated genes on autosomes. Post-translationally, hydroxybutyrylation of histones is induced by starvation. Lactylated in macrophages by EP300/P300 by using lactoyl-CoA directly derived from endogenous or exogenous lactate, leading to stimulates gene transcription.

The protein resides in the nucleus. It localises to the chromosome. Its function is as follows. Core component of nucleosome. Nucleosomes wrap and compact DNA into chromatin, limiting DNA accessibility to the cellular machineries which require DNA as a template. Histones thereby play a central role in transcription regulation, DNA repair, DNA replication and chromosomal stability. DNA accessibility is regulated via a complex set of post-translational modifications of histones, also called histone code, and nucleosome remodeling. The polypeptide is Histone H2A type 2-A (Hist2h2aa1) (Mus musculus (Mouse)).